The following is an 863-amino-acid chain: Scm-like with four MBT domains protein 1 (863 aa).

MBT repeat units lie at residues 20–120 (FSWE…LEAP), 128–232 (SDWS…LQPP), 242–346 (ADWQ…INPP), and 354–451 (FDWA…LSTP). Residues 638-773 (KKKNKRIGRP…SDGENKPPSP (136 aa)) form a disordered region. Residues 660 to 679 (KTSKRRKRRKNIFVHKKKRS) show a composition bias toward basic residues. The span at 680-691 (SASVDNTPVGSP) shows a compositional bias: polar residues. Over residues 696-710 (GEDEDDADDGDDDSL) the composition is skewed to acidic residues. Ser764 and Ser772 each carry phosphoserine. The region spanning 793 to 861 (WSVADVVRFI…RIKFAFYEQF (69 aa)) is the SAM domain.

In terms of assembly, interacts with MYOD1. Component of the SLC (SFMBT1-LSD1-CoREST) corepressor complex, which also contains KDM1A/LSD1 and RCOR1/CoREST. Interacts with KDM1A/LSD1 and RCOR1/CoREST. Interacts with MYOD1. Interacts with L3MBTL3. In terms of tissue distribution, highly expressed in the testis, low expression was detected in brain, kidney, heart and lung.

Its subcellular location is the nucleus. Its function is as follows. Histone-binding protein, which is part of various corepressor complexes. Mediates the recruitment of corepressor complexes to target genes, followed by chromatin compaction and repression of transcription. Plays a role during myogenesis: required for the maintenance of undifferentiated states of myogenic progenitor cells via interaction with MYOD1. Interaction with MYOD1 leads to the recruitment of associated corepressors and silencing of MYOD1 target genes. Part of the SLC complex in germ cells, where it may play a role during spermatogenesis. This is Scm-like with four MBT domains protein 1 (Sfmbt1) from Rattus norvegicus (Rat).